The chain runs to 151 residues: Cytochrome c-type biogenesis protein CcmE (151 aa).

Residues 1 to 8 (MNPLRKKR) are Cytoplasmic-facing. A helical; Signal-anchor for type II membrane protein transmembrane segment spans residues 9–29 (LLIILAILVGVGIAVGLALSA). Residues 30–151 (LKENINLFYT…QSAPTPAKEG (122 aa)) lie on the Periplasmic side of the membrane. Residues His-124 and Tyr-128 each contribute to the heme site. The interval 131 to 151 (PEVTKALKDSGQSAPTPAKEG) is disordered.

Belongs to the CcmE/CycJ family.

It is found in the cell inner membrane. Functionally, heme chaperone required for the biogenesis of c-type cytochromes. Transiently binds heme delivered by CcmC and transfers the heme to apo-cytochromes in a process facilitated by CcmF and CcmH. The chain is Cytochrome c-type biogenesis protein CcmE from Pseudomonas fluorescens (strain ATCC BAA-477 / NRRL B-23932 / Pf-5).